Here is a 595-residue protein sequence, read N- to C-terminus: Fructan 1-exohydrolase (595 aa).

The N-terminal stretch at 1–20 (MAQAWAFLLPLLVLGSYVTS) is a signal peptide. Residue D74 is part of the active site. Residues N167, N235, and N247 are each glycosylated (N-linked (GlcNAc...) asparagine). A disulfide bridge connects residues C445 and C491. N-linked (GlcNAc...) asparagine glycosylation occurs at N566.

The protein belongs to the glycosyl hydrolase 32 family.

The enzyme catalyses Hydrolysis of terminal, non-reducing (2-&gt;1)-linked beta-D-fructofuranose residues in fructans.. Its activity is regulated as follows. Inhibited by sucrose. Functionally, hydrolyzes inulin-type beta-(2,1)-fructans. May play a role as a beta-(2,1)-trimmer during graminan biosynthesis. This chain is Fructan 1-exohydrolase, found in Aegilops speltoides (Goatgrass).